The chain runs to 388 residues: Succinate--CoA ligase [ADP-forming] subunit beta (388 aa).

Residues 9–244 (KQLFAEYGLP…PSQDDAREAH (236 aa)) form the ATP-grasp domain. ATP-binding positions include lysine 46, 53 to 55 (GRG), glutamate 99, threonine 102, and glutamate 107. Mg(2+) contacts are provided by asparagine 199 and aspartate 213. Substrate-binding positions include asparagine 264 and 321–323 (GIV).

It belongs to the succinate/malate CoA ligase beta subunit family. In terms of assembly, heterotetramer of two alpha and two beta subunits. It depends on Mg(2+) as a cofactor.

It catalyses the reaction succinate + ATP + CoA = succinyl-CoA + ADP + phosphate. It carries out the reaction GTP + succinate + CoA = succinyl-CoA + GDP + phosphate. The protein operates within carbohydrate metabolism; tricarboxylic acid cycle; succinate from succinyl-CoA (ligase route): step 1/1. In terms of biological role, succinyl-CoA synthetase functions in the citric acid cycle (TCA), coupling the hydrolysis of succinyl-CoA to the synthesis of either ATP or GTP and thus represents the only step of substrate-level phosphorylation in the TCA. The beta subunit provides nucleotide specificity of the enzyme and binds the substrate succinate, while the binding sites for coenzyme A and phosphate are found in the alpha subunit. The polypeptide is Succinate--CoA ligase [ADP-forming] subunit beta (Pseudomonas entomophila (strain L48)).